A 451-amino-acid polypeptide reads, in one-letter code: tRNA-2-methylthio-N(6)-dimethylallyladenosine synthase (451 aa).

The region spanning 1-116 (MTYFFETYGC…LPQIFDEIKA (116 aa)) is the MTTase N-terminal domain. The [4Fe-4S] cluster site is built by C10, C46, C79, C162, C166, and C169. One can recognise a Radical SAM core domain in the interval 148–384 (SPKSFQSYVP…IDLQLKITAK (237 aa)). One can recognise a TRAM domain in the interval 387 to 451 (KAKLGKKVDI…KGKTFRANLN (65 aa)).

Belongs to the methylthiotransferase family. MiaB subfamily. Monomer. [4Fe-4S] cluster serves as cofactor.

The protein resides in the cytoplasm. The catalysed reaction is N(6)-dimethylallyladenosine(37) in tRNA + (sulfur carrier)-SH + AH2 + 2 S-adenosyl-L-methionine = 2-methylsulfanyl-N(6)-dimethylallyladenosine(37) in tRNA + (sulfur carrier)-H + 5'-deoxyadenosine + L-methionine + A + S-adenosyl-L-homocysteine + 2 H(+). Its function is as follows. Catalyzes the methylthiolation of N6-(dimethylallyl)adenosine (i(6)A), leading to the formation of 2-methylthio-N6-(dimethylallyl)adenosine (ms(2)i(6)A) at position 37 in tRNAs that read codons beginning with uridine. The chain is tRNA-2-methylthio-N(6)-dimethylallyladenosine synthase from Treponema denticola (strain ATCC 35405 / DSM 14222 / CIP 103919 / JCM 8153 / KCTC 15104).